The primary structure comprises 273 residues: Large ribosomal subunit protein uL2 (273 aa).

Residues valine 228–lysine 273 are disordered. Positions lysine 254 to lysine 273 are enriched in basic residues.

It belongs to the universal ribosomal protein uL2 family. As to quaternary structure, part of the 50S ribosomal subunit. Forms a bridge to the 30S subunit in the 70S ribosome.

Functionally, one of the primary rRNA binding proteins. Required for association of the 30S and 50S subunits to form the 70S ribosome, for tRNA binding and peptide bond formation. It has been suggested to have peptidyltransferase activity; this is somewhat controversial. Makes several contacts with the 16S rRNA in the 70S ribosome. This chain is Large ribosomal subunit protein uL2, found in Rickettsia canadensis (strain McKiel).